Consider the following 300-residue polypeptide: GTPase Era (300 aa).

One can recognise an Era-type G domain in the interval 8–176 (RCGYVAIVGR…EGLIAKHLPE (169 aa)). Residues 16–23 (GRPNVGKS) form a G1 region. GTP is bound at residue 16–23 (GRPNVGKS). The tract at residues 42–46 (QTTRH) is G2. The tract at residues 63 to 66 (DTPG) is G3. GTP contacts are provided by residues 63–67 (DTPGM) and 125–128 (NKTD). A G4 region spans residues 125–128 (NKTD). The segment at 155-157 (VSA) is G5. Residues 199-283 (VREKIMRQLG…MLNLWVKVKG (85 aa)) form the KH type-2 domain.

This sequence belongs to the TRAFAC class TrmE-Era-EngA-EngB-Septin-like GTPase superfamily. Era GTPase family. In terms of assembly, monomer.

It localises to the cytoplasm. Its subcellular location is the cell inner membrane. In terms of biological role, an essential GTPase that binds both GDP and GTP, with rapid nucleotide exchange. Plays a role in 16S rRNA processing and 30S ribosomal subunit biogenesis and possibly also in cell cycle regulation and energy metabolism. The polypeptide is GTPase Era (Pseudomonas fluorescens (strain ATCC BAA-477 / NRRL B-23932 / Pf-5)).